Consider the following 183-residue polypeptide: Threonylcarbamoyl-AMP synthase (183 aa).

The YrdC-like domain occupies 1-183 (MNITQIIEKL…LFTNQLVRQG (183 aa)).

It belongs to the SUA5 family. TsaC subfamily.

The protein localises to the cytoplasm. It carries out the reaction L-threonine + hydrogencarbonate + ATP = L-threonylcarbamoyladenylate + diphosphate + H2O. Functionally, required for the formation of a threonylcarbamoyl group on adenosine at position 37 (t(6)A37) in tRNAs that read codons beginning with adenine. Catalyzes the conversion of L-threonine, HCO(3)(-)/CO(2) and ATP to give threonylcarbamoyl-AMP (TC-AMP) as the acyladenylate intermediate, with the release of diphosphate. The sequence is that of Threonylcarbamoyl-AMP synthase from Histophilus somni (strain 2336) (Haemophilus somnus).